Here is a 289-residue protein sequence, read N- to C-terminus: Segregation and condensation protein A (289 aa).

Over residues 1-18 (MSEDRRSPTDEAPREGEL) the composition is skewed to basic and acidic residues. The tract at residues 1-24 (MSEDRRSPTDEAPREGELPRSPGD) is disordered.

It belongs to the ScpA family. As to quaternary structure, component of the Structural Maintenance of Chromosome (SMC) condensin-like complex composed of ScpA, ScpB and the Smc homodimer. ScpA and ScpB bind to the head domain of Smc. The presence of the three proteins is required for the association of the complex with DNA.

Its subcellular location is the cytoplasm. In terms of biological role, a conditionally essential component of the chromosome segregation machinery. Participates in chromosomal partition during cell division. Important for positioning of ParB-parS complexes (ori of replication) and of the ter replication site, as well as for segration of the ParB-parS complex and thus chromosome segregation. May act via the formation of a condensin-like complex containing Smc, ScpA and ScpB that pulls DNA away from mid-cell into both cell halves. The chain is Segregation and condensation protein A from Myxococcus xanthus (strain DK1622).